Here is a 131-residue protein sequence, read N- to C-terminus: Profilin-1 (131 aa).

This sequence belongs to the profilin family. In terms of assembly, occurs in many kinds of cells as a complex with monomeric actin in a 1:1 ratio.

It is found in the cytoplasm. The protein localises to the cytoskeleton. Binds to actin and affects the structure of the cytoskeleton. At high concentrations, profilin prevents the polymerization of actin, whereas it enhances it at low concentrations. By binding to PIP2, it inhibits the formation of IP3 and DG. In Malus domestica (Apple), this protein is Profilin-1.